The sequence spans 628 residues: Dihydroxy-acid dehydratase (628 aa).

Position 80 (Asp80) interacts with Mg(2+). Cys121 provides a ligand contact to [2Fe-2S] cluster. 2 residues coordinate Mg(2+): Asp122 and Lys123. An N6-carboxylysine modification is found at Lys123. Cys207 is a binding site for [2Fe-2S] cluster. Glu503 provides a ligand contact to Mg(2+). Ser529 serves as the catalytic Proton acceptor.

It belongs to the IlvD/Edd family. In terms of assembly, homodimer. It depends on [2Fe-2S] cluster as a cofactor. Mg(2+) serves as cofactor.

The catalysed reaction is (2R)-2,3-dihydroxy-3-methylbutanoate = 3-methyl-2-oxobutanoate + H2O. The enzyme catalyses (2R,3R)-2,3-dihydroxy-3-methylpentanoate = (S)-3-methyl-2-oxopentanoate + H2O. Its pathway is amino-acid biosynthesis; L-isoleucine biosynthesis; L-isoleucine from 2-oxobutanoate: step 3/4. The protein operates within amino-acid biosynthesis; L-valine biosynthesis; L-valine from pyruvate: step 3/4. Functionally, functions in the biosynthesis of branched-chain amino acids. Catalyzes the dehydration of (2R,3R)-2,3-dihydroxy-3-methylpentanoate (2,3-dihydroxy-3-methylvalerate) into 2-oxo-3-methylpentanoate (2-oxo-3-methylvalerate) and of (2R)-2,3-dihydroxy-3-methylbutanoate (2,3-dihydroxyisovalerate) into 2-oxo-3-methylbutanoate (2-oxoisovalerate), the penultimate precursor to L-isoleucine and L-valine, respectively. The polypeptide is Dihydroxy-acid dehydratase (Psychrobacter arcticus (strain DSM 17307 / VKM B-2377 / 273-4)).